A 790-amino-acid chain; its full sequence is Protein sel-1 homolog 1 (790 aa).

Positions 1 to 21 (MQVRVRLSLLLLCAVLLGSAA) are cleaved as a signal peptide. A disordered region spans residues 22-51 (ATSDDKTNQDDSLDSKSSLPTDESVKDHTT). Over 22 to 734 (ATSDDKTNQD…LFTQLDMDQL (713 aa)) the chain is Lumenal. The interval 23-733 (TSDDKTNQDD…DLFTQLDMDQ (711 aa)) is interaction with ERLEC1, OS9 and SYVN1. A Phosphoserine modification is found at Ser64. Over residues 67 to 78 (AEVESLLQDEED) the composition is skewed to acidic residues. The tract at residues 67–98 (AEVESLLQDEEDSSKTQEEEISFLESPNPSSK) is disordered. Residues 118–166 (AHGEPCHFPFLFLDKEYDECTSDGREDGRLWCATTYDYKTDEKWGFCET) enclose the Fibronectin type-II domain. 2 cysteine pairs are disulfide-bonded: Cys123–Cys149 and Cys137–Cys164. Sel1-like repeat units lie at residues 179–214 (AEMIYQAGMKILNGSNRKSQKREAYRYLQKAAGMNH), 215–250 (TKALERVSYALLFGDYLTQNIQAAKEMFEKLTEEGS), 251–286 (PKGQTGLGFLYASGLGVNSSQAKALVYYTFGALGGN), 287–322 (LIAHMILGYRYWAGIGVLQSCESALTHYRLVANHVA), 369–405 (VQAQVGLGQLHLHGGRGVEQNHQRAFDYFNLAANAGN), 406–442 (SHAMAFLGKMYSEGSDIVPQSNETALHYFKKAADMGN), 443–478 (PVGQSGLGMAYLYGRGVQVNYDLALKYFQKAAEQGW), 479–514 (VDGQLQLGSMYYNGIGVKRDYKQALKYFNLASQGGH), and 515–550 (ILAFYNLAQMHASGTGVMRSCHTAVELFKNVCERGR). N-linked (GlcNAc...) asparagine glycans are attached at residues Asn191 and Asn213. A glycan (N-linked (GlcNAc...) asparagine) is linked at Asn268. The interval 348-533 (NSGMLEEDLI…MHASGTGVMR (186 aa)) is important for homodimerization and oligomerization. Residue Asn427 is glycosylated (N-linked (GlcNAc...) asparagine). Asn604 is a glycosylation site (N-linked (GlcNAc...) asparagine). Sel1-like repeat units follow at residues 623–658 (TVARIKLGDYHFYGFGTDVDYETAFIHYRLASEQQH) and 660–695 (AQAMFNLGYMHEKGLGIKQDIHLAKRFYDMAAEASP). The segment at 639-719 (TDVDYETAFI…VVYFLQYIRE (81 aa)) is interaction with SYVN1. The tract at residues 734-790 (LLGPEWDLYLMTIIALLLGTVIAYRQRQHQDIPVPRPPGPRPAPPQQEGPPEQQPPQ) is mediates retention in the endoplasmic reticulum. A helical membrane pass occupies residues 735 to 755 (LGPEWDLYLMTIIALLLGTVI). At 756–790 (AYRQRQHQDIPVPRPPGPRPAPPQQEGPPEQQPPQ) the chain is on the cytoplasmic side. The disordered stretch occupies residues 763–790 (QDIPVPRPPGPRPAPPQQEGPPEQQPPQ). A compositionally biased stretch (pro residues) spans 767-790 (VPRPPGPRPAPPQQEGPPEQQPPQ).

This sequence belongs to the sel-1 family. In terms of assembly, homodimer and homooligomer. May form a complex with ERLEC1, HSPA5, OS9, and SYVN1. Interacts with FOXRED2 and EDEM1. Interacts with LPL and LMF1; may stabilize the complex formed by LPL and LMF1 and thereby promote the export of LPL dimers. Component of the HRD1 complex, which comprises at least SYNV1/HRD1, DERL1/2, FAM8A1, HERPUD1/HERP, OS9, SEL1L and UBE2J1. SYNV1 assembles with SEL1L and FAM8A1 through its transmembrane domains, but interaction with its cytoplasmic domain is required to confer stability to FAM8A1 and enhance recruitment of HERPUD1. The interaction with SYNV1/HRD1 is direct. N-glycosylated. As to expression, highly expressed in pancreas, white adipose tissue, liver and spleen (at protein level). Detected in heart, brain, spleen, lung, liver, kidney and testis.

It localises to the endoplasmic reticulum membrane. Plays a role in the endoplasmic reticulum quality control (ERQC) system also called ER-associated degradation (ERAD) involved in ubiquitin-dependent degradation of misfolded endoplasmic reticulum proteins. Enhances SYVN1 stability. Plays a role in LPL maturation and secretion. Required for normal differentiation of the pancreas epithelium, and for normal exocrine function and survival of pancreatic cells. May play a role in Notch signaling. The protein is Protein sel-1 homolog 1 (Sel1l) of Mus musculus (Mouse).